Here is a 248-residue protein sequence, read N- to C-terminus: MPEVSLYNYTMSICSMKTRLAMEEFGVDYDDKQVDIGFALENFEPDYVRLNEKAVVPTLVVGDRVVTNSYNIVLEAAKLGKVGIPADPVENKAALDWFQKGDQVNFQVITYGHKGVPRGDELLIARRERAKEYAEKYPELRSIYQAAHDRIVEHGNCAYDADTVAQAEVDLQKRLDELDAHLADKPFIAGSNYSIADIMWTVLLARIEMLNMTAWISERPNLLAYYQRMKARRSFETARVMPNWKGGI.

The region spanning 2–84 (PEVSLYNYTM…EAAKLGKVGI (83 aa)) is the GST N-terminal domain. Positions 133-248 (YAEKYPELRS…RVMPNWKGGI (116 aa)) constitute a GST C-terminal domain.

This sequence belongs to the GST superfamily. As to quaternary structure, homodimer.

The catalysed reaction is 2,6-dichlorohydroquinone + glutathione disulfide + chloride + H(+) = 2,3,6-trichlorohydroquinone + 2 glutathione. It carries out the reaction 2,3,6-trichlorohydroquinone + glutathione disulfide + chloride = 2,3,5,6-tetrachlorohydroquinone + 2 glutathione. It participates in xenobiotic degradation; pentachlorophenol degradation. Functionally, sequential reduction of tetrachloro-p-hydroquinone to monochlorophenol, using glutathione as the reducing agent. This Sphingobium chlorophenolicum protein is Tetrachloro-P-hydroquinone reductive dehalogenase (pcpC).